Reading from the N-terminus, the 417-residue chain is Zinc finger CCCH domain-containing protein ZFN-like (417 aa).

2 C3H1-type zinc fingers span residues 31 to 58 and 75 to 103; these read PGEP…HPPN and RLGQ…HPKD. The segment at 121 to 149 adopts a C3H1-type 3; degenerate zinc-finger fold; it reads RPNESERAYYLRTGQCKFGNTCKFHHPQP. 2 C3H1-type zinc fingers span residues 278–306 and 324–352; these read RPDQ…HPRE and RPGE…HPMG. Residues 383–417 are disordered; sequence SSEGLVESGTAKPRRLSLSETRPIPPGDDNIDDEG.

It localises to the nucleus. The chain is Zinc finger CCCH domain-containing protein ZFN-like from Pisum sativum (Garden pea).